A 130-amino-acid chain; its full sequence is uncharacterized protein (130 aa).

The next 2 helical transmembrane spans lie at 35–57 (FLIT…FISL) and 72–91 (IVFF…LLLL).

It localises to the cell membrane. This is an uncharacterized protein from Pasteurella multocida (strain Pm70).